The following is a 587-amino-acid chain: Prolycopene isomerase 1, chloroplastic (587 aa).

Residues 1 to 13 (MLCLSLNSSSTSP) are compositionally biased toward low complexity. The disordered stretch occupies residues 1–21 (MLCLSLNSSSTSPPKSPLHHS). Residues 1-50 (MLCLSLNSSSTSPPKSPLHHSFSRRSMRSWVCSPRVQRKKLGFWSSPKAV) constitute a chloroplast transit peptide.

It belongs to the carotenoid/retinoid oxidoreductase family. CrtISO subfamily. The cofactor is NAD(+). NADP(+) serves as cofactor. FAD is required as a cofactor. As to expression, up-regulated in the flower buds and flower lip tissue, while it is weakly expressed in leaves.

The protein resides in the plastid. It is found in the chloroplast membrane. It carries out the reaction 7,7',9,9'-tetra-cis-lycopene = all-trans-lycopene. It participates in carotenoid biosynthesis; lycopene biosynthesis. In terms of biological role, carotene cis-trans-isomerase that converts 7,9,9'-tri-cis-neurosporene to 9'-cis-neurosporene and 7,9,9',7'-tetra-cis-lycopene (also known as prolycopene) into all-trans-lycopene. Isomerization requires redox-active components, suggesting that isomerization is achieved by a reversible redox reaction acting at specific double bonds. Isomerizes adjacent cis-double bonds at C7 and C9 pairwise into the trans-configuration, but is incapable of isomerizing single cis-double bonds at C9 and C9'. This Oncidium hybrid cultivar (Orchid) protein is Prolycopene isomerase 1, chloroplastic (CRTISO1).